Consider the following 311-residue polypeptide: Aspartate carbamoyltransferase catalytic subunit (311 aa).

Carbamoyl phosphate contacts are provided by R55 and T56. Position 85 (K85) interacts with L-aspartate. Residues R106, H135, and Q138 each contribute to the carbamoyl phosphate site. Residues R168 and R230 each contribute to the L-aspartate site. Carbamoyl phosphate contacts are provided by L268 and P269.

It belongs to the aspartate/ornithine carbamoyltransferase superfamily. ATCase family. In terms of assembly, heterododecamer (2C3:3R2) of six catalytic PyrB chains organized as two trimers (C3), and six regulatory PyrI chains organized as three dimers (R2).

It catalyses the reaction carbamoyl phosphate + L-aspartate = N-carbamoyl-L-aspartate + phosphate + H(+). It participates in pyrimidine metabolism; UMP biosynthesis via de novo pathway; (S)-dihydroorotate from bicarbonate: step 2/3. Functionally, catalyzes the condensation of carbamoyl phosphate and aspartate to form carbamoyl aspartate and inorganic phosphate, the committed step in the de novo pyrimidine nucleotide biosynthesis pathway. This chain is Aspartate carbamoyltransferase catalytic subunit, found in Baumannia cicadellinicola subsp. Homalodisca coagulata.